An 846-amino-acid chain; its full sequence is Matrin-3 (846 aa).

An N-acetylserine modification is found at serine 2. N6-acetyllysine; alternate is present on lysine 3. Lysine 3 participates in a covalent cross-link: Glycyl lysine isopeptide (Lys-Gly) (interchain with G-Cter in SUMO2); alternate. 7 positions are modified to phosphoserine: serine 4, serine 9, serine 14, serine 22, serine 41, serine 118, and serine 126. Glycyl lysine isopeptide (Lys-Gly) (interchain with G-Cter in SUMO2) cross-links involve residues lysine 132 and lysine 146. 2 disordered regions span residues 147–174 (RRRT…YRVP) and 187–213 (DSFD…ESGY). Threonine 150 carries the phosphothreonine modification. Position 157 is a phosphoserine (serine 157). At tyrosine 158 the chain carries Phosphotyrosine. Residues 160–174 (RDGRSATREPPYRVP) show a composition bias toward basic and acidic residues. Residues serine 164, serine 188, and serine 195 each carry the phosphoserine modification. Positions 201–213 (DYDHGSRSQESGY) are enriched in basic and acidic residues. At tyrosine 202 the chain carries Phosphotyrosine. A phosphoserine mark is found at serine 206, serine 208, and serine 211. Position 219 is a phosphotyrosine (tyrosine 219). A Phosphoserine modification is found at serine 234. Residue lysine 245 forms a Glycyl lysine isopeptide (Lys-Gly) (interchain with G-Cter in SUMO2) linkage. Phosphoserine is present on serine 264. Lysine 269 is covalently cross-linked (Glycyl lysine isopeptide (Lys-Gly) (interchain with G-Cter in SUMO2)). The residue at position 275 (serine 275) is a Phosphoserine. The disordered stretch occupies residues 342-394 (PFMLQQSTNPAPGILGPPPPSFHLGGPAVGPRGNLGAGNGNLQGPRHMQKGRV). The 76-residue stretch at 398 to 473 (RVVHIMDFQR…KPVRVHLSQK (76 aa)) folds into the RRM 1 domain. Glycyl lysine isopeptide (Lys-Gly) (interchain with G-Cter in SUMO2) cross-links involve residues lysine 478, lysine 487, and lysine 491. Residues 496-571 (RVIHLSNLPH…RCVKVDLSEK (76 aa)) form the RRM 2 domain. Phosphoserine occurs at positions 509 and 511. Residue lysine 515 forms a Glycyl lysine isopeptide (Lys-Gly) (interchain with G-Cter in SUMO2) linkage. Lysine 522 is subject to N6-acetyllysine; alternate. Lysine 522 participates in a covalent cross-link: Glycyl lysine isopeptide (Lys-Gly) (interchain with G-Cter in SUMO2); alternate. Serine 533 bears the Phosphoserine mark. Residues lysine 554 and lysine 555 each participate in a glycyl lysine isopeptide (Lys-Gly) (interchain with G-Cter in SUMO2) cross-link. Lysine 571 carries the N6-acetyllysine modification. The interval 588-779 (KKDKSRKRSY…EDYTIPDEYR (192 aa)) is disordered. Phosphoserine occurs at positions 596, 598, 604, and 606. Positions 600–642 (DGKESPSDKKSKTDAQKTESPAEGKEQEEKSGEDGEKDTKDDQ) are enriched in basic and acidic residues. Residues lysine 616 and lysine 629 each participate in a glycyl lysine isopeptide (Lys-Gly) (interchain with G-Cter in SUMO2) cross-link. Residues 652–664 (ESEDELLVDEEEA) show a composition bias toward acidic residues. A phosphoserine mark is found at serine 653, serine 670, serine 672, and serine 673. The span at 665 to 675 (AALLESGSSVG) shows a compositional bias: low complexity. Position 678 is a phosphothreonine (threonine 678). At serine 688 the chain carries Phosphoserine. The span at 688–703 (SDGKKEPSDKAVKKDP) shows a compositional bias: basic and acidic residues. Positions 709 to 717 (SKKKLKKVD) match the Nuclear localization signal motif. Residues lysine 718 and lysine 735 each participate in a glycyl lysine isopeptide (Lys-Gly) (interchain with G-Cter in SUMO2) cross-link. Threonine 740 is subject to Phosphothreonine. A phosphoserine mark is found at serine 746 and serine 758. Residues 766–779 (DENKEDYTIPDEYR) show a composition bias toward basic and acidic residues. Lysine 769 is covalently cross-linked (Glycyl lysine isopeptide (Lys-Gly) (interchain with G-Cter in SUMO2)). Residues 800 to 831 (FYCKLCSLFYTNEEVAKNTHCSSLPHYQKLKK) form a Matrin-type zinc finger. An N6-acetyllysine; alternate modification is found at lysine 835. Lysine 835 participates in a covalent cross-link: Glycyl lysine isopeptide (Lys-Gly) (interchain with G-Cter in SUMO2); alternate.

In terms of assembly, part of a complex consisting of SFPQ, NONO and MATR3. Interacts with AGO1 and AGO2. Part of a complex composed at least of ASH2L, EMSY, HCFC1, HSPA8, CCAR2, MATR3, MKI67, RBBP5, TUBB2A, WDR5 and ZNF335; this complex may have a histone H3-specific methyltransferase activity. Interacts with TARDBP. Part of the HDP-RNP complex composed of at least HEXIM1, PRKDC, XRCC5, XRCC6, paraspeckle proteins (SFPQ, NONO, PSPC1, RBM14, and MATR3) and NEAT1 RNA. Interacts with FUS. Interacts with IGF2BP1. Interacts with IGF2BP2 and IGF2BP3. Interacts with RBPMS.

The protein resides in the nucleus matrix. In terms of biological role, may play a role in transcription or may interact with other nuclear matrix proteins to form the internal fibrogranular network. In association with the SFPQ-NONO heteromer may play a role in nuclear retention of defective RNAs. Plays a role in the regulation of DNA virus-mediated innate immune response by assembling into the HDP-RNP complex, a complex that serves as a platform for IRF3 phosphorylation and subsequent innate immune response activation through the cGAS-STING pathway. Binds to N6-methyladenosine (m6A)-containing mRNAs and contributes to MYC stability by binding to m6A-containing MYC mRNAs. May bind to specific miRNA hairpins. In Mus musculus (Mouse), this protein is Matrin-3 (Matr3).